A 254-amino-acid chain; its full sequence is D-aminoacyl-tRNA deacylase (254 aa).

It belongs to the DtdA deacylase family. Monomer. Requires Zn(2+) as cofactor.

The catalysed reaction is a D-aminoacyl-tRNA + H2O = a tRNA + a D-alpha-amino acid + H(+). It carries out the reaction glycyl-tRNA(Ala) + H2O = tRNA(Ala) + glycine + H(+). Its function is as follows. D-aminoacyl-tRNA deacylase with broad substrate specificity. By recycling D-aminoacyl-tRNA to D-amino acids and free tRNA molecules, this enzyme counteracts the toxicity associated with the formation of D-aminoacyl-tRNA entities in vivo. The sequence is that of D-aminoacyl-tRNA deacylase from Methanococcus vannielii (strain ATCC 35089 / DSM 1224 / JCM 13029 / OCM 148 / SB).